The primary structure comprises 235 residues: Aspartate/glutamate leucyltransferase (235 aa).

Belongs to the R-transferase family. Bpt subfamily.

Its subcellular location is the cytoplasm. The enzyme catalyses N-terminal L-glutamyl-[protein] + L-leucyl-tRNA(Leu) = N-terminal L-leucyl-L-glutamyl-[protein] + tRNA(Leu) + H(+). It carries out the reaction N-terminal L-aspartyl-[protein] + L-leucyl-tRNA(Leu) = N-terminal L-leucyl-L-aspartyl-[protein] + tRNA(Leu) + H(+). Its function is as follows. Functions in the N-end rule pathway of protein degradation where it conjugates Leu from its aminoacyl-tRNA to the N-termini of proteins containing an N-terminal aspartate or glutamate. The protein is Aspartate/glutamate leucyltransferase of Pseudomonas entomophila (strain L48).